We begin with the raw amino-acid sequence, 320 residues long: Probable trehalose-phosphate phosphatase C (320 aa).

Belongs to the trehalose phosphatase family. Requires a divalent metal cation as cofactor.

It catalyses the reaction alpha,alpha-trehalose 6-phosphate + H2O = alpha,alpha-trehalose + phosphate. Its pathway is glycan biosynthesis; trehalose biosynthesis. In terms of biological role, removes the phosphate from trehalose 6-phosphate to produce free trehalose. Trehalose accumulation in plant may improve abiotic stress tolerance. The sequence is that of Probable trehalose-phosphate phosphatase C (TPPC) from Arabidopsis thaliana (Mouse-ear cress).